The following is a 132-amino-acid chain: Small ribosomal subunit protein uS8 (132 aa).

It belongs to the universal ribosomal protein uS8 family. As to quaternary structure, part of the 30S ribosomal subunit. Contacts proteins S5 and S12.

In terms of biological role, one of the primary rRNA binding proteins, it binds directly to 16S rRNA central domain where it helps coordinate assembly of the platform of the 30S subunit. The chain is Small ribosomal subunit protein uS8 from Rickettsia rickettsii (strain Sheila Smith).